The sequence spans 280 residues: Transcription factor MYB46 (280 aa).

2 HTH myb-type domains span residues 15 to 67 (VKKM…INYL) and 68 to 122 (RPDL…KKRL). 2 DNA-binding regions (H-T-H motif) span residues 43 to 67 (WSDV…INYL) and 95 to 118 (WSQI…NSTI). Positions 129-150 (SNLINNSSSSPNTASDSSSNSA) are disordered.

As to expression, expressed at low levels in stems and siliques, specifically in xylem.

Its subcellular location is the nucleus. Its function is as follows. Transcription activator. Involved in the regulation of secondary wall biosynthesis in fibers and vessels. Transcription activator of the mannan synthase CSLA9 that recognizes and binds to the DNA consensus sequence 5'-[AG][GT]T[AT]GGT[GA]-3' cis-regulatory element of CSLA9 promoter. Transcription factor that acts as a molecular switch in the NAC012/SND1-mediated transcriptional network regulating secondary wall biosynthesis. Is directly activated by NAC012/SND1. Functions redundantly with MYB83 in the transcriptional regulatory cascade leading to secondary wall formation in fibers and vessels. Transcription activator that binds to the DNA consensus sequence 5'-ACC[AT]A[AC][TC]-3', designated as the secondary wall MYB-responsive element (SMRE). Regulates directly numerous transcription factors and a number of genes involved in secondary wall biosynthesis that contain SMRE elements in their promoters. Is an obligate component of the transcriptional regulatory complex toward the commitment of secondary wall cellulose synthesis. Is required for functional expression of the three secondary wall CESA genes, CESA4, CESA7 and CESA8. This is Transcription factor MYB46 from Arabidopsis thaliana (Mouse-ear cress).